The primary structure comprises 130 residues: Small ribosomal subunit protein uS11 (130 aa).

Belongs to the universal ribosomal protein uS11 family. As to quaternary structure, part of the 30S ribosomal subunit. Interacts with proteins S7 and S18. Binds to IF-3.

Its function is as follows. Located on the platform of the 30S subunit, it bridges several disparate RNA helices of the 16S rRNA. Forms part of the Shine-Dalgarno cleft in the 70S ribosome. The protein is Small ribosomal subunit protein uS11 of Prochlorococcus marinus (strain MIT 9515).